A 189-amino-acid polypeptide reads, in one-letter code: ComE operon protein 2 (189 aa).

A CMP/dCMP-type deaminase domain is found at 5–132 (SWNQYFMAQS…PYAQELFEQA (128 aa)). Histidine 70 contacts Zn(2+). Glutamate 72 serves as the catalytic Proton donor. The Zn(2+) site is built by cysteine 98 and cysteine 101.

This sequence belongs to the cytidine and deoxycytidylate deaminase family. Zn(2+) is required as a cofactor.

In terms of biological role, dispensable for transformability. The sequence is that of ComE operon protein 2 (comEB) from Bacillus subtilis (strain 168).